The primary structure comprises 138 residues: Nucleoside diphosphate kinase (138 aa).

ATP-binding residues include Lys11, Phe59, Arg87, Thr93, Arg104, and Asn114. His117 serves as the catalytic Pros-phosphohistidine intermediate.

It belongs to the NDK family. It depends on Mg(2+) as a cofactor.

It is found in the cytoplasm. It carries out the reaction a 2'-deoxyribonucleoside 5'-diphosphate + ATP = a 2'-deoxyribonucleoside 5'-triphosphate + ADP. The enzyme catalyses a ribonucleoside 5'-diphosphate + ATP = a ribonucleoside 5'-triphosphate + ADP. Its function is as follows. Major role in the synthesis of nucleoside triphosphates other than ATP. The ATP gamma phosphate is transferred to the NDP beta phosphate via a ping-pong mechanism, using a phosphorylated active-site intermediate. This is Nucleoside diphosphate kinase from Saccharolobus islandicus (strain Y.N.15.51 / Yellowstone #2) (Sulfolobus islandicus).